A 382-amino-acid polypeptide reads, in one-letter code: N-acetyldiaminopimelate deacetylase (382 aa).

Asp-73 is a catalytic residue. Glu-132 serves as the catalytic Proton acceptor.

Belongs to the peptidase M20A family. N-acetyldiaminopimelate deacetylase subfamily.

It carries out the reaction N-acetyl-(2S,6S)-2,6-diaminopimelate + H2O = (2S,6S)-2,6-diaminopimelate + acetate. Its pathway is amino-acid biosynthesis; L-lysine biosynthesis via DAP pathway; LL-2,6-diaminopimelate from (S)-tetrahydrodipicolinate (acetylase route): step 3/3. In terms of biological role, catalyzes the conversion of N-acetyl-diaminopimelate to diaminopimelate and acetate. The protein is N-acetyldiaminopimelate deacetylase of Oenococcus oeni (strain ATCC BAA-331 / PSU-1).